The primary structure comprises 281 residues: Glycerol uptake facilitator protein (281 aa).

Residues 1-5 (MSQTS) lie on the Cytoplasmic side of the membrane. A helical membrane pass occupies residues 6–34 (TLKGQCIAEFLGTGLLIFFGVGCVAALKV). The Periplasmic portion of the chain corresponds to 35–39 (AGASF). Residues 40–60 (GQWEISVIWGLGVAMAIYLTA) traverse the membrane as a helical segment. Residues 61-63 (GVS) lie on the Cytoplasmic side of the membrane. The stretch at 64-67 (GAHL) is an intramembrane region. An NPA 1 motif is present at residues 68–70 (NPA). Residues 68-78 (NPAVTIALWLF) constitute an intramembrane region (helical). The Cytoplasmic portion of the chain corresponds to 79–84 (ACFDKR). A helical membrane pass occupies residues 85–108 (KVIPFIVSQVAGAFCAAALVYGLY). Residues 109–143 (YNLFFDFEQTHHIVRGSVESVDLAGTFSTYPNPHI) lie on the Periplasmic side of the membrane. A helical transmembrane segment spans residues 144–169 (NFVQAFAVEMVITAILMGLILALTDD). Residues 170–177 (GNGVPRGP) lie on the Cytoplasmic side of the membrane. The chain crosses the membrane as a helical span at residues 178 to 194 (LAPLLIGLLIAVIGASM). Topologically, residues 195-198 (GPLT) are periplasmic. The stretch at 199 to 202 (GFAM) is an intramembrane region. An NPA 2 motif is present at residues 203 to 205 (NPA). An intramembrane region (helical) is located at residues 203–216 (NPARDFGPKVFAWL). Residues 217–231 (AGWGNVAFTGGRDIP) lie on the Periplasmic side of the membrane. Residues 232–254 (YFLVPLFGPIVGAIVGAFAYRKL) form a helical membrane-spanning segment. The Cytoplasmic portion of the chain corresponds to 255–281 (IGRHLPCDICVVEEKETTTPSEQKASL).

It belongs to the MIP/aquaporin (TC 1.A.8) family. In terms of assembly, homotetramer.

It is found in the cell inner membrane. It carries out the reaction glycerol(in) = glycerol(out). In terms of biological role, mediates glycerol diffusion across the cytoplasmic membrane via a pore-type mechanism. The protein is Glycerol uptake facilitator protein (glpF) of Escherichia coli O157:H7.